The following is a 231-amino-acid chain: 7-cyano-7-deazaguanine synthase (231 aa).

Residue 8-18 (FSGGQDSTTCL) participates in ATP binding. Zn(2+)-binding residues include Cys-188, Cys-197, Cys-200, and Cys-203.

Belongs to the QueC family. The cofactor is Zn(2+).

It catalyses the reaction 7-carboxy-7-deazaguanine + NH4(+) + ATP = 7-cyano-7-deazaguanine + ADP + phosphate + H2O + H(+). It participates in purine metabolism; 7-cyano-7-deazaguanine biosynthesis. Its function is as follows. Catalyzes the ATP-dependent conversion of 7-carboxy-7-deazaguanine (CDG) to 7-cyano-7-deazaguanine (preQ(0)). The sequence is that of 7-cyano-7-deazaguanine synthase from Escherichia coli O127:H6 (strain E2348/69 / EPEC).